Here is a 233-residue protein sequence, read N- to C-terminus: MAGKRTRKINEGVDPTKLYALTTAIGMVKERAVAKFDETIEVSMNLGVDPRHADQMVRGVVNLPNGTGRTVRVAVFARGAKADEAKAAGADVVGAEDLVEIVQGGKIEFDRCIATPDMMPLVGRLGKVLGPRGMMPNPKVGTVTMDVAGAVKASKGGAVEFRVEKAGIVHAGIGKASFDAKALEENIRAFADAVIKAKPAGAKGNYVKRVAISSTMGPGVKIEVGSVTAAPTA.

The protein belongs to the universal ribosomal protein uL1 family. As to quaternary structure, part of the 50S ribosomal subunit.

Binds directly to 23S rRNA. The L1 stalk is quite mobile in the ribosome, and is involved in E site tRNA release. Functionally, protein L1 is also a translational repressor protein, it controls the translation of the L11 operon by binding to its mRNA. This chain is Large ribosomal subunit protein uL1, found in Rhizobium etli (strain ATCC 51251 / DSM 11541 / JCM 21823 / NBRC 15573 / CFN 42).